The following is a 100-amino-acid chain: Urease subunit gamma (100 aa).

The protein belongs to the urease gamma subunit family. Heterotrimer of UreA (gamma), UreB (beta) and UreC (alpha) subunits. Three heterotrimers associate to form the active enzyme.

It is found in the cytoplasm. The catalysed reaction is urea + 2 H2O + H(+) = hydrogencarbonate + 2 NH4(+). It functions in the pathway nitrogen metabolism; urea degradation; CO(2) and NH(3) from urea (urease route): step 1/1. In Mycolicibacterium gilvum (strain PYR-GCK) (Mycobacterium gilvum (strain PYR-GCK)), this protein is Urease subunit gamma.